A 434-amino-acid polypeptide reads, in one-letter code: Cullin-like protein 5 (434 aa).

Positions 1–34 (MKRSISPDPFSSTKSPKLVHHSPDDGGAEGNPYR) are disordered.

The protein belongs to the cullin family.

The sequence is that of Cullin-like protein 5 from Arabidopsis thaliana (Mouse-ear cress).